Consider the following 428-residue polypeptide: Something about silencing protein 10 (428 aa).

Positions 1 to 93 (MDSDGDDYVM…NTMDWGSKRS (93 aa)) are disordered. Acidic residues-rich tracts occupy residues 15-24 (QEYDDEEREI) and 46-62 (SDDD…EQQD). Ser152, Ser323, Ser324, and Ser337 each carry phosphoserine. The tract at residues 317-386 (GQQASVSSDD…LRNPRVKHRG (70 aa)) is disordered. Positions 324–336 (SDDDDNDDDDDAE) are enriched in acidic residues. Residues 344–353 (EEAGEEEEEE) are compositionally biased toward acidic residues. The segment covering 370–386 (TPHRKKELRNPRVKHRG) has biased composition (basic residues).

It belongs to the SAS10 family.

It is found in the nucleus. In terms of biological role, essential for gene silencing: has a role in the structure of silenced chromatin. May be involved in gene regulation during development. Binds RNA. The polypeptide is Something about silencing protein 10 (Drosophila melanogaster (Fruit fly)).